Here is a 2101-residue protein sequence, read N- to C-terminus: General transcription factor 3C polypeptide 1 (2101 aa).

The span at 473-487 shows a compositional bias: acidic residues; it reads GEEAFLSDSESEEES. Disordered stretches follow at residues 473–574 and 588–609; these read GEEA…MDSH and NPKE…DKPH. Residues 492 to 503 show a composition bias toward basic residues; sequence GKRRGRGSRGHA. Positions 504 to 513 are enriched in low complexity; sequence RASGDAGSGS. A Glycyl lysine isopeptide (Lys-Gly) (interchain with G-Cter in SUMO2) cross-link involves residue Lys534. Residue Ser667 is modified to Phosphoserine. Disordered stretches follow at residues 718–772 and 820–864; these read STAN…EKMG and GEQP…SSWE. The span at 747 to 759 shows a compositional bias: polar residues; the sequence is RSANSDPNTSSKP. 2 stretches are compositionally biased toward basic and acidic residues: residues 760 to 771 and 826 to 836; these read ESTRVKKTDEKM and HSERKTGKQES. Residues Lys770 and Lys833 each participate in a glycyl lysine isopeptide (Lys-Gly) (interchain with G-Cter in SUMO2) cross-link. Ser1063 is modified (phosphoserine). The span at 1186-1196 shows a compositional bias: basic and acidic residues; that stretch reads EEQFELDREPT. 3 disordered regions span residues 1186–1239, 1598–1627, and 1822–1923; these read EEQF…KKLR, KSLG…QGVE, and DTKA…QENQ. Residue Thr1196 is modified to Phosphothreonine. The segment covering 1199–1215 has biased composition (basic residues); sequence RNRKVRGGKSQKRKRLK. The segment covering 1229 to 1239 has biased composition (basic and acidic residues); that stretch reads EHPEAKSKKLR. The segment covering 1606–1617 has biased composition (acidic residues); sequence LDDDEEEEDLDE. Residues 1822–1831 show a composition bias toward basic and acidic residues; sequence DTKASGDDSQ. 2 positions are modified to phosphoserine: Ser1854 and Ser1890. Low complexity predominate over residues 1900–1910; sequence EAQAPAQLAAP.

This sequence belongs to the TFIIIC subunit 1 family. Part of the TFIIIC subcomplex TFIIIC2, consisting of six subunits, GTF3C1, GTF3C2, GTF3C3, GTF3C4, GTF3C5 and GTF3C6. Interacts with IGHMBP2. Interacts with MAF1.

It is found in the nucleus. Its function is as follows. Required for RNA polymerase III-mediated transcription. Component of TFIIIC that initiates transcription complex assembly on tRNA and is required for transcription of 5S rRNA and other stable nuclear and cytoplasmic RNAs. Binds to the box B promoter element. This chain is General transcription factor 3C polypeptide 1 (Gtf3c1), found in Mus musculus (Mouse).